Here is a 244-residue protein sequence, read N- to C-terminus: NAD(P)H-quinone oxidoreductase subunit K (244 aa).

Residues Cys51, Cys52, Cys116, and Cys147 each contribute to the [4Fe-4S] cluster site.

The protein belongs to the complex I 20 kDa subunit family. NDH-1 can be composed of about 15 different subunits; different subcomplexes with different compositions have been identified which probably have different functions. [4Fe-4S] cluster serves as cofactor.

It is found in the cellular thylakoid membrane. It catalyses the reaction a plastoquinone + NADH + (n+1) H(+)(in) = a plastoquinol + NAD(+) + n H(+)(out). The catalysed reaction is a plastoquinone + NADPH + (n+1) H(+)(in) = a plastoquinol + NADP(+) + n H(+)(out). In terms of biological role, NDH-1 shuttles electrons from an unknown electron donor, via FMN and iron-sulfur (Fe-S) centers, to quinones in the respiratory and/or the photosynthetic chain. The immediate electron acceptor for the enzyme in this species is believed to be plastoquinone. Couples the redox reaction to proton translocation, and thus conserves the redox energy in a proton gradient. Cyanobacterial NDH-1 also plays a role in inorganic carbon-concentration. The polypeptide is NAD(P)H-quinone oxidoreductase subunit K (Synechococcus sp. (strain JA-3-3Ab) (Cyanobacteria bacterium Yellowstone A-Prime)).